The sequence spans 286 residues: Ribosomal RNA small subunit methyltransferase A (286 aa).

Residues N33, V35, G60, E81, D111, and N129 each contribute to the S-adenosyl-L-methionine site.

It belongs to the class I-like SAM-binding methyltransferase superfamily. rRNA adenine N(6)-methyltransferase family. RsmA subfamily.

The protein localises to the cytoplasm. The enzyme catalyses adenosine(1518)/adenosine(1519) in 16S rRNA + 4 S-adenosyl-L-methionine = N(6)-dimethyladenosine(1518)/N(6)-dimethyladenosine(1519) in 16S rRNA + 4 S-adenosyl-L-homocysteine + 4 H(+). In terms of biological role, specifically dimethylates two adjacent adenosines (A1518 and A1519) in the loop of a conserved hairpin near the 3'-end of 16S rRNA in the 30S particle. May play a critical role in biogenesis of 30S subunits. The polypeptide is Ribosomal RNA small subunit methyltransferase A (Streptomyces coelicolor (strain ATCC BAA-471 / A3(2) / M145)).